A 166-amino-acid chain; its full sequence is Myosin regulatory light chain 2, ventricular/cardiac muscle isoform (166 aa).

A N,N,N-trimethylalanine modification is found at A2. The residue at position 14 (N14) is a Deamidated asparagine. Phosphoserine; by ZIPK/DAPK3 is present on S15. S19 bears the Phosphoserine mark. 3 consecutive EF-hand domains span residues 24–59 (TQIQ…LGRV), 94–129 (DPEE…QAER), and 130–165 (FSKE…GEEK). Residues D37, N39, D41, and D48 each coordinate Ca(2+). T52 is modified (phosphothreonine).

As to quaternary structure, myosin is a hexamer of 2 heavy chains and 4 light chains. Interacts with MYOC. Post-translationally, N-terminus is methylated by METTL11A/NTM1. In terms of processing, phosphorylated by MYLK3 and MYLK2; promotes cardiac muscle contraction and function. Dephosphorylated by PPP1CB complexed to PPP1R12B. The phosphorylated form in adult is expressed as gradients across the heart from endocardium (low phosphorylation) to epicardium (high phosphorylation); regulates cardiac torsion and workload distribution. Highly expressed in type I muscle fibers.

The protein localises to the cytoplasm. It localises to the myofibril. The protein resides in the sarcomere. It is found in the a band. Its function is as follows. Contractile protein that plays a role in heart development and function. Following phosphorylation, plays a role in cross-bridge cycling kinetics and cardiac muscle contraction by increasing myosin lever arm stiffness and promoting myosin head diffusion; as a consequence of the increase in maximum contraction force and calcium sensitivity of contraction force. These events altogether slow down myosin kinetics and prolong duty cycle resulting in accumulated myosins being cooperatively recruited to actin binding sites to sustain thin filament activation as a means to fine-tune myofilament calcium sensitivity to force. During cardiogenesis plays an early role in cardiac contractility by promoting cardiac myofibril assembly. This chain is Myosin regulatory light chain 2, ventricular/cardiac muscle isoform, found in Homo sapiens (Human).